A 307-amino-acid polypeptide reads, in one-letter code: D-alanine--D-alanine ligase (307 aa).

The 201-residue stretch at 101–301 folds into the ATP-grasp domain; it reads KTVMRAAGVS…FGELVRWMVE (201 aa). Residue 127-182 coordinates ATP; the sequence is PLTPPYVVKPIAEGSSMGVIIVREERSHPPQILASDEWVYGEEVLAETYIAGRELT. Residues D251, E268, and N270 each contribute to the Mg(2+) site.

This sequence belongs to the D-alanine--D-alanine ligase family. The cofactor is Mg(2+). It depends on Mn(2+) as a cofactor.

The protein localises to the cytoplasm. It catalyses the reaction 2 D-alanine + ATP = D-alanyl-D-alanine + ADP + phosphate + H(+). Its pathway is cell wall biogenesis; peptidoglycan biosynthesis. Functionally, cell wall formation. This is D-alanine--D-alanine ligase from Methylorubrum populi (strain ATCC BAA-705 / NCIMB 13946 / BJ001) (Methylobacterium populi).